An 829-amino-acid chain; its full sequence is Spindle-defective protein 2 (829 aa).

Disordered regions lie at residues 1–29 (MNEDAPMDLVDDRFADQSIQDEPVDDGES), 41–104 (EDED…SNDI), 183–294 (KKDV…TTSD), and 326–471 (RKKR…NGHM). The span at 54 to 82 (FRLENRYKPSLHTPRELPTIREENREDVR) shows a compositional bias: basic and acidic residues. Over residues 83 to 93 (SNTSSRVNTRP) the composition is skewed to polar residues. Basic and acidic residues predominate over residues 183-216 (KKDVTRKQENVRPGKMMPEKVNDENEPKSRRFSP). 2 stretches are compositionally biased toward polar residues: residues 217–230 (ERNTFTTSPMNSTK) and 266–294 (PQRTSGTPKTYESRHPTNAYTPNSATTSD). Positions 314-332 (VDINLLTALENARKKRDRP) form a coiled coil. Low complexity-rich tracts occupy residues 361-370 (SMTSIVSSST) and 384-408 (NSATSTDLTNSNTSNFTNNTSRVST). 2 stretches are compositionally biased toward polar residues: residues 409 to 439 (AKNDFSRSSRQRNGFSDSSVSTIIPNMNSMT) and 448 to 463 (SVSSVRTISRASSTMT).

The protein resides in the cytoplasm. The protein localises to the cytoskeleton. It localises to the microtubule organizing center. Its subcellular location is the centrosome. It is found in the centriole. Its function is as follows. Required both for centrosome duplication and maturation. Required for pericentriolar material (PCM) recruitment. In Caenorhabditis briggsae, this protein is Spindle-defective protein 2.